A 39-amino-acid polypeptide reads, in one-letter code: Photosystem II reaction center protein J (39 aa).

The chain crosses the membrane as a helical span at residues 7–27 (IPLWIVAVVAGMGVIAVVGIF).

Belongs to the PsbJ family. In terms of assembly, PSII is composed of 1 copy each of membrane proteins PsbA, PsbB, PsbC, PsbD, PsbE, PsbF, PsbH, PsbI, PsbJ, PsbK, PsbL, PsbM, PsbT, PsbX, PsbY, PsbZ, Psb30/Ycf12, peripheral proteins PsbO, CyanoQ (PsbQ), PsbU, PsbV and a large number of cofactors. It forms dimeric complexes.

The protein localises to the cellular thylakoid membrane. In terms of biological role, this protein is a component of the reaction center of photosystem II. Functionally, one of the components of the core complex of photosystem II (PSII). PSII is a light-driven water:plastoquinone oxidoreductase that uses light energy to abstract electrons from H(2)O, generating O(2) and a proton gradient subsequently used for ATP formation. It consists of a core antenna complex that captures photons, and an electron transfer chain that converts photonic excitation into a charge separation. The polypeptide is Photosystem II reaction center protein J (Picosynechococcus sp. (strain ATCC 27264 / PCC 7002 / PR-6) (Agmenellum quadruplicatum)).